The primary structure comprises 568 residues: 2-succinyl-5-enolpyruvyl-6-hydroxy-3-cyclohexene-1-carboxylate synthase (568 aa).

This sequence belongs to the TPP enzyme family. MenD subfamily. Homodimer. Requires Mg(2+) as cofactor. It depends on Mn(2+) as a cofactor. Thiamine diphosphate is required as a cofactor.

It carries out the reaction isochorismate + 2-oxoglutarate + H(+) = 5-enolpyruvoyl-6-hydroxy-2-succinyl-cyclohex-3-ene-1-carboxylate + CO2. Its pathway is quinol/quinone metabolism; 1,4-dihydroxy-2-naphthoate biosynthesis; 1,4-dihydroxy-2-naphthoate from chorismate: step 2/7. The protein operates within quinol/quinone metabolism; menaquinone biosynthesis. Functionally, catalyzes the thiamine diphosphate-dependent decarboxylation of 2-oxoglutarate and the subsequent addition of the resulting succinic semialdehyde-thiamine pyrophosphate anion to isochorismate to yield 2-succinyl-5-enolpyruvyl-6-hydroxy-3-cyclohexene-1-carboxylate (SEPHCHC). The protein is 2-succinyl-5-enolpyruvyl-6-hydroxy-3-cyclohexene-1-carboxylate synthase of Actinobacillus pleuropneumoniae serotype 3 (strain JL03).